The primary structure comprises 153 residues: Transthyretin (153 aa).

A signal peptide spans 1–19; sequence MASFKSFLLLALLAIVSEA. A Sulfocysteine modification is found at C34. Positions 39 and 78 each coordinate L-thyroxine. N81 is a glycosylation site (N-linked (GlcNAc...) asparagine). Position 141 (S141) interacts with L-thyroxine.

Belongs to the transthyretin family. As to quaternary structure, homotetramer. Dimer of dimers. In the homotetramer, subunits assemble around a central channel that can accommodate two ligand molecules. Interacts with rbp4. Post-translationally, sulfonation of the reactive cysteine Cys-34 enhances the stability of the native conformation of TTR, avoiding misassembly of the protein leading to amyloid formation. In terms of tissue distribution, detected in plasma (at protein level). Expressed during metamorphosis in tadpole liver, but not in tadpole brain nor adult liver. Between 1.5 and 3 days of development, also expressed in the mesoderm of the kidney.

The protein localises to the secreted. Thyroid hormone-binding protein, with a much higher binding affinity for triiodothyronine (T3) than for thyroxine (T4). Probably transports triiodothyronine from the bloodstream to the brain. This is Transthyretin (ttr) from Xenopus laevis (African clawed frog).